A 142-amino-acid polypeptide reads, in one-letter code: Large ribosomal subunit protein uL13 (142 aa).

Belongs to the universal ribosomal protein uL13 family. In terms of assembly, part of the 50S ribosomal subunit.

In terms of biological role, this protein is one of the early assembly proteins of the 50S ribosomal subunit, although it is not seen to bind rRNA by itself. It is important during the early stages of 50S assembly. The chain is Large ribosomal subunit protein uL13 from Shewanella baltica (strain OS185).